We begin with the raw amino-acid sequence, 503 residues long: Cytochrome P450 3A8 (503 aa).

Residue cysteine 442 participates in heme binding.

This sequence belongs to the cytochrome P450 family. The cofactor is heme.

It localises to the endoplasmic reticulum membrane. It is found in the microsome membrane. The catalysed reaction is an organic molecule + reduced [NADPH--hemoprotein reductase] + O2 = an alcohol + oxidized [NADPH--hemoprotein reductase] + H2O + H(+). Catalyzes nifedipine and nilvadipine oxidations. The protein is Cytochrome P450 3A8 (CYP3A8) of Macaca fascicularis (Crab-eating macaque).